We begin with the raw amino-acid sequence, 183 residues long: Non-classical export protein 2 homolog (183 aa).

Topologically, residues methionine 1–glycine 8 are cytoplasmic. Residues valine 9–alanine 29 form a helical membrane-spanning segment. At serine 30 to lysine 44 the chain is on the extracellular side. A helical transmembrane segment spans residues isoleucine 45 to glycine 65. Topologically, residues arginine 66–proline 75 are cytoplasmic. A helical transmembrane segment spans residues tryptophan 76–isoleucine 96. Residues alanine 97–cysteine 131 lie on the Extracellular side of the membrane. A helical membrane pass occupies residues phenylalanine 132–alanine 152. The Cytoplasmic segment spans residues lysine 153–valine 183. Residues glycine 163–valine 183 form a disordered region.

It belongs to the NCE102 family.

The protein resides in the cytoplasm. Its subcellular location is the golgi apparatus membrane. The protein localises to the cell membrane. In terms of biological role, involved in membrane organization and might act as a sensor of sphingolipids that regulates plasma membrane function. Involved in a novel pathway of export of proteins that lack a cleavable signal sequence. The sequence is that of Non-classical export protein 2 homolog (fhn1) from Schizosaccharomyces pombe (strain 972 / ATCC 24843) (Fission yeast).